The following is a 1290-amino-acid chain: MLDVNFFDQLQIGLATADDIRTWSHGEVKKPETINYRTLKPERDGLFCEKIFGPTRDWECYCGKYKRVRFKGIICERCGVEVTRSKVRRERMGHIELAAPVTHIWYFKGVPSRLGYLLDLAPKDLEKVIYFAAYMITAVDEDARHRDLSSLEGKVGLERERLEKRRDQSIDDRAKKLEEDLAALEAEGAKADQRRKVKDGAEREMKQLRDRAQREIDRLDEVWNTFKSLKVQDLMGDEMLYREMKNWFGKYFEGHMGATAIQKRLESFDIEAEVELLRDTIANGKGQRKVRALKRLKVVDAFRKTGNKPQGMVLDAVPVIPPDLRPMVQLDGGRFATSDLNDLYRRVINRNNRLKRLLDLGAPEIIVNNEKRMLQEAVDSLFDNGRRGRPVTGPGNRPLKSLSDMLKGKQGRFRQNLLGKRVDYSGRSVIVSGPQLKLHQCGLPKQMALELFKPFVMKRLVDLSHAQNIKSAKRMVERARPVVWDVLEEVITEHPVLLNRAPTLHRLGIQAFEPQLIEGKAIQIHPLVCSAFNADFDGDQMAVHLPLSAEAQAEARILMLSTNNILKPSDGRPVTMPTQDMIIGLFFLTTDRDGQPGDGRAFASPAEAIMAFDRGEISLQSKVRIRFTDIVPPLELGADWEQGQAVSLETTLGRALFNETLPADYPYVNYEVGKKALGAIVNDLAERYTKVEVAASLDALKDTGFHWATRSGVTVSIDDVTTPGDKADILSGYEAQAAKVQKQFERGLVTDEERRQELIEIWTQASNEVGKAMEANFDRANPIYMMVDSGASGNMNQIRQVAAMRGLVANPKGEIIPRPIKSNFREGLTVLEYFIATHGARKGLADTALRTADSGYLTRRLVDVSQDVIIREDDCGTERGLPKRIGERREDGTVVKAENAETAAYARTSAVDVAHPETGEVLVRAGEDLGDVKIGELISAGVEEVKVRSVLTCDAKTGTCAKCYGRSLATGKLVDIGEAVGIIAAQSIGEPGTQLTMRTFHTGGVASADDITQGLPRVVELFEARSPKGRSPISEAAGRVTIEESDKARKVLITPDDGSEVQEYPVSKRSRLLVGDGDHIEVGQMLTVGTPDPQDVLRILGVRRAQEHLVDEVQAVYRSQGVSIHDKHIEIIVRQMLRRITVIESGDTNLLPSDLVDRVRFEEENRRVVSEGGKPASGRPVLMGITKASLATESWLSAASFQETTRVLTDAAIHGRSDSLRGLKENVIIGKLIPAGTGLERYRNIRVEPTEEARAAAYSVTGYDSYDYEFGNGTGQAVALDDFDFGSYQN.

Zn(2+) contacts are provided by C60, C62, C75, and C78. D535, D537, and D539 together coordinate Mg(2+). Residues C875, C953, C960, and C963 each contribute to the Zn(2+) site.

The protein belongs to the RNA polymerase beta' chain family. As to quaternary structure, the RNAP catalytic core consists of 2 alpha, 1 beta, 1 beta' and 1 omega subunit. When a sigma factor is associated with the core the holoenzyme is formed, which can initiate transcription. Mg(2+) serves as cofactor. Zn(2+) is required as a cofactor.

It catalyses the reaction RNA(n) + a ribonucleoside 5'-triphosphate = RNA(n+1) + diphosphate. Its function is as follows. DNA-dependent RNA polymerase catalyzes the transcription of DNA into RNA using the four ribonucleoside triphosphates as substrates. In Nocardioides sp. (strain ATCC BAA-499 / JS614), this protein is DNA-directed RNA polymerase subunit beta'.